Consider the following 658-residue polypeptide: Endoglucanase 3 (658 aa).

The first 23 residues, 1 to 23 (MQLKNFYPKMSVLGIATVMALTA), serve as a signal peptide directing secretion. Residue cysteine 24 is the site of N-palmitoyl cysteine attachment. The S-diacylglycerol cysteine moiety is linked to residue cysteine 24. Positions 24-265 (CGDENTQALF…TDSLFIDNIY (242 aa)) are excised as a propeptide. The interval 42-83 (ENQVPVSSSDMSPTSSDAVIDPTSSSAAVVDPSTLPAEGPIT) is disordered. The span at 45–58 (VPVSSSDMSPTSSD) shows a compositional bias: low complexity. In terms of domain architecture, CBM11 spans 87 to 277 (GLGTLVDDFE…DSSEVEKDQP (191 aa)). Glutamate 448 serves as the catalytic Proton donor. Glutamate 597 functions as the Nucleophile in the catalytic mechanism.

Belongs to the glycosyl hydrolase 5 (cellulase A) family. In terms of assembly, monomer. Post-translationally, may be a lipoprotein and may be glycosylated.

The protein resides in the membrane. It carries out the reaction Endohydrolysis of (1-&gt;4)-beta-D-glucosidic linkages in cellulose, lichenin and cereal beta-D-glucans.. Its function is as follows. Exhibits both endoglucanase and cellobiosidase activities. This is Endoglucanase 3 (cel-3) from Fibrobacter succinogenes (strain ATCC 19169 / S85).